Reading from the N-terminus, the 767-residue chain is DNA topoisomerase 1 (767 aa).

Basic and acidic residues predominate over residues 1–23 (MSGDHLHNDSQIEADFRLNDSHK). The disordered stretch occupies residues 1 to 200 (MSGDHLHNDS…DNKKKKAKKE (200 aa)). Residue Ser2 is modified to N-acetylserine. Ser2 and Ser10 each carry phosphoserine. Over residues 24–39 (HKDKHKDREHRHKEHK) the composition is skewed to basic residues. Basic and acidic residues predominate over residues 40 to 110 (KDKDKDREKS…DAKIKKEKEN (71 aa)). The residue at position 59 (Ser59) is a Phosphoserine. A Glycyl lysine isopeptide (Lys-Gly) (interchain with G-Cter in SUMO2) cross-link involves residue Lys103. Lys105 participates in a covalent cross-link: Glycyl lysine isopeptide (Lys-Gly) (interchain with G-Cter in SUMO); alternate. Lys105 participates in a covalent cross-link: Glycyl lysine isopeptide (Lys-Gly) (interchain with G-Cter in SUMO2); alternate. Ser114 carries the post-translational modification Phosphoserine. Lys119 is covalently cross-linked (Glycyl lysine isopeptide (Lys-Gly) (interchain with G-Cter in SUMO); alternate). A Glycyl lysine isopeptide (Lys-Gly) (interchain with G-Cter in SUMO2); alternate cross-link involves residue Lys119. A Glycyl lysine isopeptide (Lys-Gly) (interchain with G-Cter in SUMO1); alternate cross-link involves residue Lys119. The segment covering 131–168 (PKEDIKPLKRPRDEDDADYKPKKIKTEDIKKEKKRKLE) has biased composition (basic and acidic residues). Glycyl lysine isopeptide (Lys-Gly) (interchain with G-Cter in SUMO2) cross-links involve residues Lys136 and Lys150. Lys155 is covalently cross-linked (Glycyl lysine isopeptide (Lys-Gly) (interchain with G-Cter in SUMO); alternate). A Glycyl lysine isopeptide (Lys-Gly) (interchain with G-Cter in SUMO2); alternate cross-link involves residue Lys155. Glycyl lysine isopeptide (Lys-Gly) (interchain with G-Cter in SUMO2) cross-links involve residues Lys160 and Lys166. Lys174 participates in a covalent cross-link: Glycyl lysine isopeptide (Lys-Gly) (interchain with G-Cter in SUMO2); alternate. Lys174 carries the N6-acetyllysine; alternate modification. Positions 181–200 (KDKDKKVAEPDNKKKKAKKE) are enriched in basic and acidic residues. Lys206 participates in a covalent cross-link: Glycyl lysine isopeptide (Lys-Gly) (interchain with G-Cter in SUMO2). The residue at position 282 (Lys282) is an N6-acetyllysine. Residue Lys338 forms a Glycyl lysine isopeptide (Lys-Gly) (interchain with G-Cter in SUMO2) linkage. Interaction with DNA stretches follow at residues 427–428 (KY) and 490–495 (RAGNEK). Residues 434–767 (SSRIKGEKDW…IDMTDEDYEF (334 aa)) enclose the Topo IB-type catalytic domain. Ser508 carries the post-translational modification Phosphoserine; by CK2. Residue Lys551 forms a Glycyl lysine isopeptide (Lys-Gly) (interchain with G-Cter in SUMO2) linkage. Positions 587 to 589 (TAK) are interaction with DNA. Residues Lys644, Lys702, and Lys714 each participate in a glycyl lysine isopeptide (Lys-Gly) (interchain with G-Cter in SUMO2) cross-link. Tyr725 (O-(3'-phospho-DNA)-tyrosine intermediate) is an active-site residue.

This sequence belongs to the type IB topoisomerase family. As to quaternary structure, monomer. Interacts with ERCC6. Interacts with TPRN; TPRN interacts with a number of DNA damage response proteins, is recruited to sites of DNA damage and may play a role in DNA damage repair. Post-translationally, sumoylated. Lys-119 is the main site of sumoylation. Sumoylation plays a role in partitioning TOP1 between nucleoli and nucleoplasm. Levels are dramatically increased on camptothecin (CPT) treatment. In terms of processing, phosphorylation at Ser-508 by CK2 increases binding to supercoiled DNA and sensitivity to camptothecin.

It is found in the nucleus. It localises to the nucleolus. The protein localises to the nucleoplasm. The catalysed reaction is ATP-independent breakage of single-stranded DNA, followed by passage and rejoining.. Releases the supercoiling and torsional tension of DNA introduced during the DNA replication and transcription by transiently cleaving and rejoining one strand of the DNA duplex. Introduces a single-strand break via transesterification at a target site in duplex DNA. The scissile phosphodiester is attacked by the catalytic tyrosine of the enzyme, resulting in the formation of a DNA-(3'-phosphotyrosyl)-enzyme intermediate and the expulsion of a 5'-OH DNA strand. The free DNA strand then rotates around the intact phosphodiester bond on the opposing strand, thus removing DNA supercoils. Finally, in the religation step, the DNA 5'-OH attacks the covalent intermediate to expel the active-site tyrosine and restore the DNA phosphodiester backbone. Regulates the alternative splicing of tissue factor (F3) pre-mRNA in endothelial cells. Involved in the circadian transcription of the core circadian clock component BMAL1 by altering the chromatin structure around the ROR response elements (ROREs) on the BMAL1 promoter. In Rattus norvegicus (Rat), this protein is DNA topoisomerase 1 (Top1).